A 137-amino-acid chain; its full sequence is MSHHHHHHQASLVVAYLLLIFLGFFGVHRFYVGRTISGVVYLLTGGIFGIGYIVDFFLLPSLVCHYNNKHHDHTTVIVSPTPVVYQSGSQHYAPYQPQPYYAQQPIQPQQQQYYQQPYQQQQYQPQPYQPNSPQYQP.

One can recognise a TM2 domain in the interval 9 to 57 (QASLVVAYLLLIFLGFFGVHRFYVGRTISGVVYLLTGGIFGIGYIVDFF). 2 helical membrane-spanning segments follow: residues 12–32 (LVVA…RFYV) and 39–59 (VVYL…FFLL). The segment at 106–137 (IQPQQQQYYQQPYQQQQYQPQPYQPNSPQYQP) is disordered.

This sequence belongs to the TM2 family.

The protein localises to the membrane. This chain is TM2 domain-containing protein DDB_G0287015, found in Dictyostelium discoideum (Social amoeba).